The sequence spans 84 residues: Conophysin-R (84 aa).

7 disulfide bridges follow: Cys6/Cys46, Cys9/Cys20, Cys14/Cys36, Cys21/Cys26, Cys53/Cys71, Cys65/Cys83, and Cys72/Cys77.

In terms of tissue distribution, expressed by the venom duct.

Its subcellular location is the secreted. Targets vasopressin-oxytocin related receptors. No effect observed when injected into goldfish or into mice. The protein is Conophysin-R of Conus radiatus (Rayed cone).